The primary structure comprises 477 residues: Bifunctional protein HldE (477 aa).

The interval 1–319 is ribokinase; that stretch reads MKITLPPFDQ…RALQEQEQSG (319 aa). Position 195-198 (195-198) interacts with ATP; it reads NLAE. D264 is a catalytic residue. The segment at 344–477 is cytidylyltransferase; the sequence is MTNGCFDLLH…IERMQSAPDT (134 aa).

In the N-terminal section; belongs to the carbohydrate kinase PfkB family. The protein in the C-terminal section; belongs to the cytidylyltransferase family. As to quaternary structure, homodimer.

The catalysed reaction is D-glycero-beta-D-manno-heptose 7-phosphate + ATP = D-glycero-beta-D-manno-heptose 1,7-bisphosphate + ADP + H(+). The enzyme catalyses D-glycero-beta-D-manno-heptose 1-phosphate + ATP + H(+) = ADP-D-glycero-beta-D-manno-heptose + diphosphate. It functions in the pathway nucleotide-sugar biosynthesis; ADP-L-glycero-beta-D-manno-heptose biosynthesis; ADP-L-glycero-beta-D-manno-heptose from D-glycero-beta-D-manno-heptose 7-phosphate: step 1/4. The protein operates within nucleotide-sugar biosynthesis; ADP-L-glycero-beta-D-manno-heptose biosynthesis; ADP-L-glycero-beta-D-manno-heptose from D-glycero-beta-D-manno-heptose 7-phosphate: step 3/4. Catalyzes the phosphorylation of D-glycero-D-manno-heptose 7-phosphate at the C-1 position to selectively form D-glycero-beta-D-manno-heptose-1,7-bisphosphate. Functionally, catalyzes the ADP transfer from ATP to D-glycero-beta-D-manno-heptose 1-phosphate, yielding ADP-D-glycero-beta-D-manno-heptose. The sequence is that of Bifunctional protein HldE from Alkalilimnicola ehrlichii (strain ATCC BAA-1101 / DSM 17681 / MLHE-1).